Reading from the N-terminus, the 314-residue chain is Dihydroorotate dehydrogenase (fumarate) (314 aa).

Residues lysine 46, 70-74 (NSMGL), and asparagine 130 contribute to the substrate site. Residue 46 to 47 (KS) coordinates FMN. Asparagine 130 serves as a coordination point for FMN. Catalysis depends on nucleophile residues serine 132 and cysteine 133. FMN-binding residues include lysine 167 and isoleucine 195. 196 to 197 (NS) contributes to the substrate binding site. FMN contacts are provided by residues glycine 224, 252–253 (GG), and 274–275 (GT).

The protein belongs to the dihydroorotate dehydrogenase family. Type 1 subfamily. As to quaternary structure, homodimer. FMN is required as a cofactor.

The protein resides in the cytoplasm. It carries out the reaction (S)-dihydroorotate + fumarate = orotate + succinate. It participates in pyrimidine metabolism; UMP biosynthesis via de novo pathway. In terms of biological role, catalyzes the conversion of dihydroorotate to orotate with fumarate as the electron acceptor. The polypeptide is Dihydroorotate dehydrogenase (fumarate) (URA1) (Saccharomyces mikatae (Yeast)).